The sequence spans 391 residues: Carbamoyl phosphate synthase small chain (391 aa).

Residues 1 to 187 (MAGVKERAVL…PLPYAWPTLK (187 aa)) are CPSase. 3 residues coordinate L-glutamine: Ser-50, Gly-239, and Gly-241. The Glutamine amidotransferase type-1 domain occupies 191–376 (RIVVMDFGIK…LEEVEAFHGA (186 aa)). The active-site Nucleophile is Cys-266. 5 residues coordinate L-glutamine: Leu-267, Gln-270, Asn-308, Gly-310, and Tyr-311. Active-site residues include His-349 and Glu-351.

The protein belongs to the CarA family. In terms of assembly, composed of two chains; the small (or glutamine) chain promotes the hydrolysis of glutamine to ammonia, which is used by the large (or ammonia) chain to synthesize carbamoyl phosphate. Tetramer of heterodimers (alpha,beta)4.

The catalysed reaction is hydrogencarbonate + L-glutamine + 2 ATP + H2O = carbamoyl phosphate + L-glutamate + 2 ADP + phosphate + 2 H(+). It carries out the reaction L-glutamine + H2O = L-glutamate + NH4(+). The protein operates within amino-acid biosynthesis; L-arginine biosynthesis; carbamoyl phosphate from bicarbonate: step 1/1. It participates in pyrimidine metabolism; UMP biosynthesis via de novo pathway; (S)-dihydroorotate from bicarbonate: step 1/3. In terms of biological role, small subunit of the glutamine-dependent carbamoyl phosphate synthetase (CPSase). CPSase catalyzes the formation of carbamoyl phosphate from the ammonia moiety of glutamine, carbonate, and phosphate donated by ATP, constituting the first step of 2 biosynthetic pathways, one leading to arginine and/or urea and the other to pyrimidine nucleotides. The small subunit (glutamine amidotransferase) binds and cleaves glutamine to supply the large subunit with the substrate ammonia. The polypeptide is Carbamoyl phosphate synthase small chain (Thermus thermophilus (strain ATCC BAA-163 / DSM 7039 / HB27)).